Consider the following 114-residue polypeptide: Large ribosomal subunit protein eL31 (114 aa).

This sequence belongs to the eukaryotic ribosomal protein eL31 family.

The protein is Large ribosomal subunit protein eL31 (RPL31) of Eremothecium gossypii (strain ATCC 10895 / CBS 109.51 / FGSC 9923 / NRRL Y-1056) (Yeast).